Reading from the N-terminus, the 314-residue chain is Putative peptide transport system permease protein BruAb2_1031 (314 aa).

6 helical membrane passes run 12 to 32 (AIPV…LLPG), 101 to 121 (LALL…VVAA), 135 to 155 (LALL…VILF), 177 to 197 (WLRS…GYLA), 237 to 257 (VSVL…SVVI), and 286 to 306 (MLFL…LYTI). One can recognise an ABC transmembrane type-1 domain in the interval 95 to 304 (LPVTISLALL…AINVLVDILY (210 aa)).

Belongs to the binding-protein-dependent transport system permease family. In terms of assembly, the complex is composed of two ATP-binding proteins (BruAb2_1033 and BruAb2_1034), two transmembrane proteins (BruAb2_1031 and BruAb2_1032) and a solute-binding protein (BruAb2_1030).

Its subcellular location is the cell inner membrane. Functionally, probably part of an ABC transporter complex that could be involved in peptide import. Probably responsible for the translocation of the substrate across the membrane. The protein is Putative peptide transport system permease protein BruAb2_1031 of Brucella abortus biovar 1 (strain 9-941).